The following is a 179-amino-acid chain: Large ribosomal subunit protein bL9 (179 aa).

A disordered region spans residues 156-179 (PEGAPVPVAEEPAAEAEQAEVAAE). The segment covering 157 to 166 (EGAPVPVAEE) has biased composition (low complexity). Residues 167–179 (PAAEAEQAEVAAE) show a composition bias toward acidic residues.

The protein belongs to the bacterial ribosomal protein bL9 family.

Binds to the 23S rRNA. The polypeptide is Large ribosomal subunit protein bL9 (Porphyromonas gingivalis (strain ATCC 33277 / DSM 20709 / CIP 103683 / JCM 12257 / NCTC 11834 / 2561)).